We begin with the raw amino-acid sequence, 504 residues long: MVSIRPDEISSILKQQIADYDKSVSVSNVGTVLQIGDGIARVYGLEKVMAGELVEFEDGTEGIALNLEDDNVGVVLMGEALGVQEGSTVKATGKIASVPVGEAMLGRVVNPLGQQIDGKGEMATTDSRLIESIAPGIIKRKSVHEPMQTGITSIDAMIPIGRGQRELIIGDRQTGKTAIAIDTIINQKGQDVICVYVAVGQKQASVANVVEVLKEKGALDYTIIVNAGASEAAALQYLAPYTGAAIAEHFMYQGKATLVIYDDLTKQAQAYRQMSLLLRRPPGREAYPGDVFYCHSRLLERAAKLSDAMGAGSMTSLPIIETQAGDVSAYIPTNVISITDGQIFLSSDLFNSGLRPAINVGISVSRVGGAAQTKAIKKIAGTLKLELAQFDELAAFSQFASDLDEATQKQLGRGKRLRELLKQPQFDPLNLAEQVAIVYAGVKGLIDEVPEEEVVKFARELRDYLKTNKAEFLKNVLSEKVLSEASESMLKDAISEVKSSMLAA.

170–177 (GDRQTGKT) contributes to the ATP binding site.

This sequence belongs to the ATPase alpha/beta chains family. As to quaternary structure, F-type ATPases have 2 components, CF(1) - the catalytic core - and CF(0) - the membrane proton channel. CF(1) has five subunits: alpha(3), beta(3), gamma(1), delta(1), epsilon(1). CF(0) has four main subunits: a(1), b(1), b'(1) and c(9-12).

The protein resides in the cellular thylakoid membrane. It catalyses the reaction ATP + H2O + 4 H(+)(in) = ADP + phosphate + 5 H(+)(out). Produces ATP from ADP in the presence of a proton gradient across the membrane. The alpha chain is a regulatory subunit. The protein is ATP synthase subunit alpha of Prochlorococcus marinus (strain NATL2A).